Here is a 203-residue protein sequence, read N- to C-terminus: Probable proteasome subunit beta type-4 (203 aa).

This sequence belongs to the peptidase T1B family. In terms of assembly, the 26S proteasome consists of a 20S proteasome core and two 19S regulatory subunits. The 20S proteasome core is composed of 28 subunits that are arranged in four stacked rings, resulting in a barrel-shaped structure. The two end rings are each formed by seven alpha subunits, and the two central rings are each formed by seven beta subunits. The catalytic chamber with the active sites is on the inside of the barrel.

It localises to the cytoplasm. Its subcellular location is the nucleus. Functionally, non-catalytic component of the proteasome, a multicatalytic proteinase complex which is characterized by its ability to cleave peptides with Arg, Phe, Tyr, Leu, and Glu adjacent to the leaving group at neutral or slightly basic pH. The proteasome has an ATP-dependent proteolytic activity. The polypeptide is Probable proteasome subunit beta type-4 (pcb-4) (Neurospora crassa (strain ATCC 24698 / 74-OR23-1A / CBS 708.71 / DSM 1257 / FGSC 987)).